A 603-amino-acid chain; its full sequence is Beta-glucuronidase (603 aa).

Asp163 and Asn412 together coordinate D-glucuronate. Residue Glu413 is the Proton donor of the active site. D-glucuronate contacts are provided by Asn466, Tyr472, Glu504, Trp549, and Lys568. The active-site Nucleophile is the Glu504. Residues 566 to 568 (NKK) carry the N-K motif motif.

The protein belongs to the glycosyl hydrolase 2 family. As to quaternary structure, homotetramer.

It carries out the reaction a beta-D-glucuronoside + H2O = D-glucuronate + an alcohol. The catalysed reaction is 4-methylumbelliferone beta-D-glucuronate + H2O = 4-methylumbelliferone + D-glucuronate. Its activity is regulated as follows. Potently inhibited by a set of synthetic compounds like thio-urea derivatives and analogs, and uronic isofagomine (UIFG) derivatives. Inhibitors of gut microbial beta-glucuronidases block the reactivation of glucuronidated cancer drugs, and thereby alleviate drug-induced GI toxicity. In terms of biological role, displays beta-glucuronidase activity with the artificial substrate p-nitrophenyl-beta-D-glucuronide (PNPG) and with 4-methylumbelliferyl-glucuronide. Is likely capable of scavenging glucuronate from a range of chemically distinct xenobiotic and endobiotic glucuronides present in the gastrointestinal (GI) tract, to be able to utilize these diverse sources of carbon. As part of the GI microbiome, this enzyme is able to reactivate glucuronide drug conjugates, such reactivated compounds can significantly damage the GI tract. The polypeptide is Beta-glucuronidase (uidA) (Escherichia coli (strain K12)).